The chain runs to 582 residues: SHC-transforming protein 2 (582 aa).

Disordered regions lie at residues 1 to 24 (MTQGPGGRAPPAPPAPPEPEAPTT) and 47 to 70 (GPAAARAAGASGGADPQPEPAGPG). Positions 8-20 (RAPPAPPAPPEPE) are enriched in pro residues. Residues 147–329 (LGPGVSYVVR…AGPEESAWGD (183 aa)) enclose the PID domain. Residues 330-486 (EEDSLEHNYY…PTEEQLRQEP (157 aa)) form a CH1 region. Phosphotyrosine is present on residues tyrosine 338, tyrosine 339, and tyrosine 414. Residues 460–481 (PLEDQWPSPPTRRAPVAPTEEQ) form a disordered region. Positions 487 to 578 (WYHGRMSRRA…ESELHLRGVV (92 aa)) constitute an SH2 domain.

Interacts with the Trk receptors in a phosphotyrosine-dependent manner and MEGF12. Once activated, binds to GRB2. Phosphorylated on tyrosines by the Trk receptors. Expressed in brain. Expressed at high level in the hypothalamus and at low level in the caudate nucleus.

Functionally, signaling adapter that couples activated growth factor receptors to signaling pathway in neurons. Involved in the signal transduction pathways of neurotrophin-activated Trk receptors in cortical neurons. This Homo sapiens (Human) protein is SHC-transforming protein 2 (SHC2).